The primary structure comprises 206 residues: Putative 3-methyladenine DNA glycosylase (206 aa).

This sequence belongs to the DNA glycosylase MPG family.

The protein is Putative 3-methyladenine DNA glycosylase of Salinibacter ruber (strain DSM 13855 / M31).